The primary structure comprises 241 residues: Triosephosphate isomerase (241 aa).

Residue Asn9–Lys11 participates in substrate binding. His88 (electrophile) is an active-site residue. The active-site Proton acceptor is Glu158. Residues Gly164, Ser203, and Gly224–Gly225 each bind substrate.

It belongs to the triosephosphate isomerase family. As to quaternary structure, homodimer.

Its subcellular location is the cytoplasm. It carries out the reaction D-glyceraldehyde 3-phosphate = dihydroxyacetone phosphate. It functions in the pathway carbohydrate biosynthesis; gluconeogenesis. The protein operates within carbohydrate degradation; glycolysis; D-glyceraldehyde 3-phosphate from glycerone phosphate: step 1/1. Involved in the gluconeogenesis. Catalyzes stereospecifically the conversion of dihydroxyacetone phosphate (DHAP) to D-glyceraldehyde-3-phosphate (G3P). This is Triosephosphate isomerase from Dichelobacter nodosus (strain VCS1703A).